Here is a 268-residue protein sequence, read N- to C-terminus: Proenkephalin-A (268 aa).

The first 24 residues, 1–24 (MARFLRLCTWLLVLGSCLLATVQA), serve as a signal peptide directing secretion. 3 cysteine pairs are disulfide-bonded: Cys26-Cys48, Cys30-Cys52, and Cys33-Cys65. The disordered stretch occupies residues 162–185 (GTGDNRAREGRHQESTDNDDNMSK). Residues 166 to 176 (NRAREGRHQES) show a composition bias toward basic and acidic residues. Propeptides lie at residues 197 to 208 (SPQVEDEAKELQ) and 218 to 228 (VGRPEWWMDYQ). Ser252 carries the phosphoserine modification.

This sequence belongs to the opioid neuropeptide precursor family. In terms of processing, proenkephalin-A is cleaved by CTSL to generate Met-enkephalin. Processed and degraded by ACE. Post-translationally, probably cleaved by ACE. In terms of processing, processed by ACE to generate Met-enkephalin in the nucleus accumbens of the brain. The N-terminal domain contains 6 conserved cysteines thought to be involved in disulfide bonding and/or processing.

The protein resides in the cytoplasmic vesicle. It localises to the secretory vesicle. Its subcellular location is the chromaffin granule lumen. It is found in the secreted. In terms of biological role, neuropeptide that competes with and mimic the effects of opiate drugs. They play a role in a number of physiologic functions, including pain perception and responses to stress. Functionally, met-enkephalin-Arg-Phe neuropeptide acts as a strong ligand of Mu-type opioid receptor OPRM1. Met-enkephalin-Arg-Phe-binding to OPRM1 in the nucleus accumbens of the brain increases activation of OPRM1, leading to long-term synaptic depression of glutamate release. Increases glutamate release in the striatum and decreases GABA concentration in the striatum. Its function is as follows. Increases glutamate release in the striatum. The polypeptide is Proenkephalin-A (PENK) (Mesocricetus auratus (Golden hamster)).